The following is a 1582-amino-acid chain: Alpha-2-macroglobulin (1582 aa).

Positions 1–15 are cleaved as a signal peptide; that stretch reads MICLAALAVAVPARA. Positions 1080-1083 form a cross-link, isoglutamyl cysteine thioester (Cys-Gln); the sequence is CAEQ.

The protein belongs to the protease inhibitor I39 (alpha-2-macroglobulin) family. Bacterial alpha-2-macroglobulin subfamily.

In terms of biological role, protects the bacterial cell from host peptidases. The chain is Alpha-2-macroglobulin from Ralstonia nicotianae (strain ATCC BAA-1114 / GMI1000) (Ralstonia solanacearum).